Reading from the N-terminus, the 584-residue chain is Glutathione hydrolase proenzyme (584 aa).

The signal sequence occupies residues 1–25 (MAPAAMNLLCTVLYLLSSFAQVSDA). An N-linked (GlcNAc...) asparagine glycan is attached at asparagine 111. Residue arginine 120 coordinates L-glutamate. N-linked (GlcNAc...) asparagine glycans are attached at residues asparagine 135, asparagine 262, asparagine 272, asparagine 350, and asparagine 370. Residue threonine 395 is the Nucleophile of the active site. Residues threonine 413, glutamate 434, and 465-466 (SS) each bind L-glutamate. Residue asparagine 547 is glycosylated (N-linked (GlcNAc...) asparagine).

This sequence belongs to the gamma-glutamyltransferase family. Heterodimer composed of the light and heavy chains. The active site is located in the light chain. In terms of processing, cleaved by autocatalysis into a large and a small subunit and the autocatalytic cleavage is essential to the functional activation of the enzyme.

It is found in the secreted. The enzyme catalyses an N-terminal (5-L-glutamyl)-[peptide] + an alpha-amino acid = 5-L-glutamyl amino acid + an N-terminal L-alpha-aminoacyl-[peptide]. It carries out the reaction glutathione + H2O = L-cysteinylglycine + L-glutamate. The catalysed reaction is an S-substituted glutathione + H2O = an S-substituted L-cysteinylglycine + L-glutamate. It catalyses the reaction leukotriene C4 + H2O = leukotriene D4 + L-glutamate. The protein operates within sulfur metabolism; glutathione metabolism. Its function is as follows. Cleaves the gamma-glutamyl bond of extracellular glutathione (gamma-Glu-Cys-Gly), glutathione conjugates, and other gamma-glutamyl compounds. The metabolism of glutathione releases free glutamate and the dipeptide cysteinyl-glycine, which is hydrolyzed to cysteine and glycine by dipeptidases. In the presence of high concentrations of dipeptides and some amino acids, can also catalyze a transpeptidation reaction, transferring the gamma-glutamyl moiety to an acceptor amino acid to form a new gamma-glutamyl compound. Initiates extracellular glutathione (GSH) breakdown, provides cells with a local cysteine supply and contributes to maintain intracellular GSH level. It is part of the cell antioxidant defense mechanism. The protein is Glutathione hydrolase proenzyme of Arthroderma benhamiae (strain ATCC MYA-4681 / CBS 112371) (Trichophyton mentagrophytes).